The chain runs to 275 residues: Large ribosomal subunit protein uL2 (275 aa).

Residues valine 223–serine 260 are disordered.

The protein belongs to the universal ribosomal protein uL2 family. Part of the 50S ribosomal subunit. Forms a bridge to the 30S subunit in the 70S ribosome.

One of the primary rRNA binding proteins. Required for association of the 30S and 50S subunits to form the 70S ribosome, for tRNA binding and peptide bond formation. It has been suggested to have peptidyltransferase activity; this is somewhat controversial. Makes several contacts with the 16S rRNA in the 70S ribosome. This chain is Large ribosomal subunit protein uL2, found in Legionella pneumophila (strain Paris).